Here is a 261-residue protein sequence, read N- to C-terminus: MAGPELLLDSNIRLWVVLPIVIITFFVGMIRHYVSILLQSDKKLTQEQVSDSQVLIRSRVLRENGKYIPKQSFLTRKYYFNNPEDGFFKKTKRKVVPPSPMTDPTMLTDMMKGNVTNVLPMILIGGWINMTFSGFVTTKVPFPLTLRFKPMLQQGIELLTLDASWVSSASWYFLNVFGLRSIYSLILGQDNAADQSRMMQEQMTGAAMAMPADTNKAFKTEWEALELTDHQWALDDVEEELMAKDLHFEGMFKKELQTSIF.

Over 2–14 (AGPELLLDSNIRL) the chain is Lumenal. A helical transmembrane segment spans residues 15 to 38 (WVVLPIVIITFFVGMIRHYVSILL). Residues 39–114 (QSDKKLTQEQ…TMLTDMMKGN (76 aa)) are Cytoplasmic-facing. Residues 115-130 (VTNVLPMILIGGWINM) form a helical membrane-spanning segment. Residues 131–168 (TFSGFVTTKVPFPLTLRFKPMLQQGIELLTLDASWVSS) are Lumenal-facing. Residues 169–187 (ASWYFLNVFGLRSIYSLIL) form a helical membrane-spanning segment. At 188 to 261 (GQDNAADQSR…FKKELQTSIF (74 aa)) the chain is on the cytoplasmic side.

This sequence belongs to the EMC3 family. Component of the ER membrane protein complex (EMC).

Its subcellular location is the endoplasmic reticulum membrane. Its function is as follows. Part of the endoplasmic reticulum membrane protein complex (EMC) that enables the energy-independent insertion into endoplasmic reticulum membranes of newly synthesized membrane proteins. Preferentially accommodates proteins with transmembrane domains that are weakly hydrophobic or contain destabilizing features such as charged and aromatic residues. Involved in the cotranslational insertion of multi-pass membrane proteins in which stop-transfer membrane-anchor sequences become ER membrane spanning helices. It is also required for the post-translational insertion of tail-anchored/TA proteins in endoplasmic reticulum membranes. By mediating the proper cotranslational insertion of N-terminal transmembrane domains in an N-exo topology, with translocated N-terminus in the lumen of the ER, controls the topology of multi-pass membrane proteins like the G protein-coupled receptors. By regulating the insertion of various proteins in membranes, it is indirectly involved in many cellular processes. In Homo sapiens (Human), this protein is ER membrane protein complex subunit 3 (EMC3).